The following is a 159-amino-acid chain: Neuroglobin (159 aa).

Positions 3–151 (KLSSKDKELI…VVASMSRGWA (149 aa)) constitute a Globin domain. Heme b is bound by residues histidine 66 and histidine 98.

This sequence belongs to the globin family. In terms of assembly, monomer. Homodimers and homotetramers. Mainly monomeric but also detected as part of homodimers and homotetramers.

Its subcellular location is the cytoplasm. The protein resides in the cytosol. The protein localises to the mitochondrion matrix. The catalysed reaction is Fe(III)-heme b-[protein] + nitric oxide + H2O = Fe(II)-heme b-[protein] + nitrite + 2 H(+). In terms of biological role, monomeric globin with a bis-histidyl six-coordinate heme-iron atom through which it can bind dioxygen, carbon monoxide and nitric oxide. Could help transport oxygen and increase its availability to the metabolically active neuronal tissues, though its low quantity in tissues as well as its high affinity for dioxygen, which may limit its oxygen-releasing ability, argue against it. The ferrous/deoxygenated form exhibits a nitrite reductase activity and it could produce nitric oxide which in turn inhibits cellular respiration in response to hypoxia. In its ferrous/deoxygenated state, it may also exhibit GDI (Guanine nucleotide Dissociation Inhibitor) activity toward heterotrimeric G-alpha proteins, thereby regulating signal transduction to facilitate neuroprotective responses in the wake of hypoxia and associated oxidative stress. In Tetraodon nigroviridis (Spotted green pufferfish), this protein is Neuroglobin (ngb).